Here is an 837-residue protein sequence, read N- to C-terminus: WW domain-containing protein tag-325 (837 aa).

A compositionally biased stretch (polar residues) spans 1–11 (MTTAVQPSDTT). Residues 1-66 (MTTAVQPSDT…SNGQNYADDP (66 aa)) are disordered. A compositionally biased stretch (low complexity) spans 33–43 (SESAESSSSSS). A compositionally biased stretch (polar residues) spans 44 to 61 (QTNVSAANTLPRESNGQN). The region spanning 96–129 (RDLLNGWFEYETDVGRTFFFNKETGKSQWIPPRF) is the WW domain. The segment covering 150–161 (TCSFQGSSTSSS) has biased composition (low complexity). Disordered stretches follow at residues 150–181 (TCSFQGSSTSSSEEQKENKMRESLADDDRKSQ), 194–257 (DDVD…STAS), 338–403 (TTSS…EPAE), 548–574 (MRRRDDPMSQSAIETVSTSVSTDEPRP), and 778–800 (KNKKAGKKAKPSKKEETQATPVQ). A compositionally biased stretch (basic and acidic residues) spans 162–181 (EEQKENKMRESLADDDRKSQ). The segment covering 247–257 (PTSSRKASTAS) has biased composition (polar residues). The span at 371-403 (RCEERRGSGDGREPVRTIRCGDLERSENDEPAE) shows a compositional bias: basic and acidic residues. The PH domain occupies 386–505 (RTIRCGDLER…WYKSLEEVVA (120 aa)). The span at 556–569 (SQSAIETVSTSVST) shows a compositional bias: polar residues. The Rho-GAP domain maps to 610–827 (STLSAICQHE…YLLESANKFD (218 aa)). The segment covering 778–788 (KNKKAGKKAKP) has biased composition (basic residues).

The chain is WW domain-containing protein tag-325 (tag-325) from Caenorhabditis elegans.